Here is a 200-residue protein sequence, read N- to C-terminus: Ribosome maturation factor RimM (200 aa).

In terms of domain architecture, PRC barrel spans 103–181 (KEGEYYFYQL…KIVAKRLEYL (79 aa)).

This sequence belongs to the RimM family. As to quaternary structure, binds ribosomal protein uS19.

It is found in the cytoplasm. In terms of biological role, an accessory protein needed during the final step in the assembly of 30S ribosomal subunit, possibly for assembly of the head region. Essential for efficient processing of 16S rRNA. May be needed both before and after RbfA during the maturation of 16S rRNA. It has affinity for free ribosomal 30S subunits but not for 70S ribosomes. This chain is Ribosome maturation factor RimM, found in Kosmotoga olearia (strain ATCC BAA-1733 / DSM 21960 / TBF 19.5.1).